A 189-amino-acid polypeptide reads, in one-letter code: GTP cyclohydrolase 1 (189 aa).

The Zn(2+) site is built by C78, H81, and C150.

It belongs to the GTP cyclohydrolase I family. As to quaternary structure, toroid-shaped homodecamer, composed of two pentamers of five dimers.

It carries out the reaction GTP + H2O = 7,8-dihydroneopterin 3'-triphosphate + formate + H(+). It functions in the pathway cofactor biosynthesis; 7,8-dihydroneopterin triphosphate biosynthesis; 7,8-dihydroneopterin triphosphate from GTP: step 1/1. This is GTP cyclohydrolase 1 from Listeria monocytogenes serovar 1/2a (strain ATCC BAA-679 / EGD-e).